The primary structure comprises 589 residues: MSGLRKTSIALMRRSTSSTTILPHSGGVGGAVSPPSSGVGVATEIEKSIAMQRLRTGESSNPKKLNVSQQPVTSVATTRTTASSLPAETTSSPAAAVRPYSEVPGPYPLPLIGNSWRFAPLIGTYKISDLDKVMNELHVNYGKMAKVGGLIGHPDLLFVFDGDEIRNIFKKEEAMPHRPSMPSLRHYKGDLRRDFFGDVAGLIGVHGPKWEAFRQEVQHILLQPQTAKKYIPPLNDIASEFMGRIELMRDEKDELPANFLHELYKWALESVGRVSLDTRLGCLSPEGSEEAQQIIEAINTFFWAVPELELRMPLWRIYPTKAYRSFVKALDQFTAICMKNIGKTMDKADADEARGLSKSEADISIVERIVRKTGNRKLAAILALDLFLVGVDTTSVAASSTIYQLAKNPDKQKKLFDELQKVFPHREADINQNVLEQMPYLRACVKETLRMRPVVIANGRSLQSDAVINGYHVPKGTHVIFPHLVVSNDPAYFPEPKRFLPERWLKQSTDAAGCPHANQKIHPFVSLPFGFGRRMCVGRRFAEIELHTLLAKIFRKYKVSYNSGEFVYRVNSTYIPQSPLNFKLTLRDE.

Residues 56–90 (TGESSNPKKLNVSQQPVTSVATTRTTASSLPAETT) form a disordered region. Over residues 57 to 71 (GESSNPKKLNVSQQP) the composition is skewed to polar residues. The span at 72–84 (VTSVATTRTTASS) shows a compositional bias: low complexity. Residue Cys-536 participates in heme binding.

This sequence belongs to the cytochrome P450 family. The cofactor is heme.

The protein resides in the endoplasmic reticulum membrane. The protein localises to the microsome membrane. Functionally, may be involved in the metabolism of insect hormones and in the breakdown of synthetic insecticides. This Drosophila melanogaster (Fruit fly) protein is Probable cytochrome P450 49a1 (Cyp49a1).